The chain runs to 513 residues: ATP synthase subunit alpha (513 aa).

169-176 (GDRQTGKT) contributes to the ATP binding site.

The protein belongs to the ATPase alpha/beta chains family. As to quaternary structure, F-type ATPases have 2 components, CF(1) - the catalytic core - and CF(0) - the membrane proton channel. CF(1) has five subunits: alpha(3), beta(3), gamma(1), delta(1), epsilon(1). CF(0) has three main subunits: a(1), b(2) and c(9-12). The alpha and beta chains form an alternating ring which encloses part of the gamma chain. CF(1) is attached to CF(0) by a central stalk formed by the gamma and epsilon chains, while a peripheral stalk is formed by the delta and b chains.

The protein resides in the cell inner membrane. The catalysed reaction is ATP + H2O + 4 H(+)(in) = ADP + phosphate + 5 H(+)(out). Functionally, produces ATP from ADP in the presence of a proton gradient across the membrane. The alpha chain is a regulatory subunit. The polypeptide is ATP synthase subunit alpha (Vesicomyosocius okutanii subsp. Calyptogena okutanii (strain HA)).